Reading from the N-terminus, the 467-residue chain is Argininosuccinate lyase (467 aa).

It belongs to the lyase 1 family. Argininosuccinate lyase subfamily.

It localises to the cytoplasm. The enzyme catalyses 2-(N(omega)-L-arginino)succinate = fumarate + L-arginine. Its pathway is amino-acid biosynthesis; L-arginine biosynthesis; L-arginine from L-ornithine and carbamoyl phosphate: step 3/3. In Nitrosococcus oceani (strain ATCC 19707 / BCRC 17464 / JCM 30415 / NCIMB 11848 / C-107), this protein is Argininosuccinate lyase.